The primary structure comprises 301 residues: m7GpppX diphosphatase (301 aa).

Residues Glu154, Lys176, and 237 to 248 (HYQPSFYHLHVH) contribute to the substrate site. The Histidine triad motif motif lies at 244–248 (HLHVH). The Nucleophile role is filled by His246.

It belongs to the HIT family.

The protein resides in the nucleus. It carries out the reaction a 5'-end (N(7)-methyl 5'-triphosphoguanosine)-ribonucleoside in mRNA + H2O = N(7)-methyl-GMP + a 5'-end diphospho-ribonucleoside in mRNA + 2 H(+). The catalysed reaction is a 5'-end (N(2),N(2),N(7)-trimethyl 5'-triphosphoguanosine)-ribonucleoside in mRNA + H2O = (N(2),N(2),N(7))-trimethyl-GMP + a 5'-end diphospho-ribonucleoside in mRNA + 2 H(+). The hydrolytic product 7-methylguanosine diphosphate (m7GDP) efficiently inhibits the decapping scavenger activity and acts as a competitive inhibitor in vitro. In terms of biological role, decapping scavenger enzyme that catalyzes the cleavage of a residual cap structure following the degradation of mRNAs of the 3'-&gt;5' exosome-mediated mRNA decay pathway. Hydrolyzes cap analog structures like 7-methylguanosine nucleoside triphosphate (m7GpppG) and tri-methyl guanosine nucleoside triphosphate (m3(2,2,7)GpppG) with up to 2 nucleotide substrates (small capped oligoribonucleotides) and specifically releases 5'-phosphorylated RNA fragments and 7-methylguanosine monophosphate (m7GMP). Does not hydrolyze unmethylated cap analog (GpppG) and shows no decapping activity on intact m7GpppG-capped mRNA molecules. Does not hydrolyze 7-methylguanosine diphosphate (m7GDP) and tri-methylguanosine diphosphate (m3(2,2,7)GDP) to m(7)GMP and m3(2,2,7)GMP, respectively. May also play a role in the 5'-&gt;3 mRNA decay pathway; m7GDP, the downstream product released by the 5'-&gt;3' mRNA mediated decapping activity, may be also converted by dcs-1 to m7GMP. Binds to m7GpppG and strongly to m7GDP. This is m7GpppX diphosphatase from Ascaris suum (Pig roundworm).